The chain runs to 274 residues: 2,3,4,5-tetrahydropyridine-2,6-dicarboxylate N-succinyltransferase (274 aa).

Substrate is bound by residues R104 and D141.

Belongs to the transferase hexapeptide repeat family. In terms of assembly, homotrimer.

The protein localises to the cytoplasm. It carries out the reaction (S)-2,3,4,5-tetrahydrodipicolinate + succinyl-CoA + H2O = (S)-2-succinylamino-6-oxoheptanedioate + CoA. Its pathway is amino-acid biosynthesis; L-lysine biosynthesis via DAP pathway; LL-2,6-diaminopimelate from (S)-tetrahydrodipicolinate (succinylase route): step 1/3. The polypeptide is 2,3,4,5-tetrahydropyridine-2,6-dicarboxylate N-succinyltransferase (Buchnera aphidicola subsp. Acyrthosiphon pisum (strain APS) (Acyrthosiphon pisum symbiotic bacterium)).